The sequence spans 158 residues: NAD(P)H-quinone oxidoreductase subunit J, chloroplastic (158 aa).

The protein belongs to the complex I 30 kDa subunit family. As to quaternary structure, NDH is composed of at least 16 different subunits, 5 of which are encoded in the nucleus.

Its subcellular location is the plastid. It localises to the chloroplast thylakoid membrane. The enzyme catalyses a plastoquinone + NADH + (n+1) H(+)(in) = a plastoquinol + NAD(+) + n H(+)(out). It carries out the reaction a plastoquinone + NADPH + (n+1) H(+)(in) = a plastoquinol + NADP(+) + n H(+)(out). Its function is as follows. NDH shuttles electrons from NAD(P)H:plastoquinone, via FMN and iron-sulfur (Fe-S) centers, to quinones in the photosynthetic chain and possibly in a chloroplast respiratory chain. The immediate electron acceptor for the enzyme in this species is believed to be plastoquinone. Couples the redox reaction to proton translocation, and thus conserves the redox energy in a proton gradient. The polypeptide is NAD(P)H-quinone oxidoreductase subunit J, chloroplastic (Trachelium caeruleum (Blue throatwort)).